A 327-amino-acid chain; its full sequence is CDPTFILDCAPCNVICSIIFQNRFDYTDQDFLTLLEKFHENLNILSSPWIQVCNNFPALIDYSPGIHNKLLKNIAYLKSYVLKKVKEHQESLDINNPRDFIDCFLIKMEQEKHNQQSEYTIENLIATVSDMFSAGTETTSTTMRYGLLLLLKHPEVTAKVQEEIDRVIGRHRSACMQDRSHMPYTDAVVHEIQRYIDLVPTNLPHAVTCDIKFRNYLIPKGTTILTSLTSVLYDCKAFPNPEVFDPGHFLDESGNFKKSDYFMPFSTGKRICVGEGLARMELFLFLTTILQKFNLKSVVDPKDIDTTPVANGFASVPPFYQICFIPL.

Cysteine 272 contributes to the heme binding site.

The protein belongs to the cytochrome P450 family. Heme is required as a cofactor.

It localises to the endoplasmic reticulum membrane. It is found in the microsome membrane. It carries out the reaction an organic molecule + reduced [NADPH--hemoprotein reductase] + O2 = an alcohol + oxidized [NADPH--hemoprotein reductase] + H2O + H(+). Functionally, cytochromes P450 are a group of heme-thiolate monooxygenases. In liver microsomes, this enzyme is involved in an NADPH-dependent electron transport pathway. It oxidizes a variety of structurally unrelated compounds, including steroids, fatty acids, and xenobiotics. This is Cytochrome P450 2C42 (CYP2C42) from Sus scrofa (Pig).